The chain runs to 63 residues: Large ribosomal subunit protein bL35 (63 aa).

This sequence belongs to the bacterial ribosomal protein bL35 family.

The chain is Large ribosomal subunit protein bL35 from Campylobacter concisus (strain 13826).